The primary structure comprises 272 residues: Small ribosomal subunit protein uS2 (272 aa).

The segment covering E224–Q233 has biased composition (basic and acidic residues). The segment at E224 to E272 is disordered. The segment covering E256–E272 has biased composition (acidic residues).

It belongs to the universal ribosomal protein uS2 family.

The polypeptide is Small ribosomal subunit protein uS2 (Corynebacterium glutamicum (strain ATCC 13032 / DSM 20300 / JCM 1318 / BCRC 11384 / CCUG 27702 / LMG 3730 / NBRC 12168 / NCIMB 10025 / NRRL B-2784 / 534)).